The sequence spans 458 residues: UDP-N-acetylglucosamine 1-carboxyvinyltransferase (458 aa).

22–23 (KN) is a phosphoenolpyruvate binding site. Arg-94 lines the UDP-N-acetyl-alpha-D-glucosamine pocket. Asp-119 serves as the catalytic Proton donor. UDP-N-acetyl-alpha-D-glucosamine contacts are provided by Asp-309 and Val-331.

The protein belongs to the EPSP synthase family. MurA subfamily.

The protein resides in the cytoplasm. The enzyme catalyses phosphoenolpyruvate + UDP-N-acetyl-alpha-D-glucosamine = UDP-N-acetyl-3-O-(1-carboxyvinyl)-alpha-D-glucosamine + phosphate. It functions in the pathway cell wall biogenesis; peptidoglycan biosynthesis. Cell wall formation. Adds enolpyruvyl to UDP-N-acetylglucosamine. This is UDP-N-acetylglucosamine 1-carboxyvinyltransferase from Chlamydia pneumoniae (Chlamydophila pneumoniae).